An 89-amino-acid chain; its full sequence is MGRSLKKGPFVSQKLLAKIDAQLESGDRKPIKTWSRASMITPDFVGLTFLVHAGKNFATVYVTENMVGHKLGEFAPTRVFKQHGGIGKK.

Belongs to the universal ribosomal protein uS19 family.

Functionally, protein S19 forms a complex with S13 that binds strongly to the 16S ribosomal RNA. The protein is Small ribosomal subunit protein uS19 of Akkermansia muciniphila (strain ATCC BAA-835 / DSM 22959 / JCM 33894 / BCRC 81048 / CCUG 64013 / CIP 107961 / Muc).